A 492-amino-acid polypeptide reads, in one-letter code: Aerolysin-3 (492 aa).

The first 23 residues, 1-23 (MKKLKITGLSLIISGLLMAQAQA), serve as a signal peptide directing secretion. Disulfide bonds link C42/C98 and C182/C187. Residues 68-84 (WQISGLANGWVIMGPGY) form an interaction with host N-linked glycan region. The segment at 256-288 (YGLSEKVTTKNKFKWPLVGETELSIEIAANQSW) is part of the transmembrane beta-barrel after proteolytic activation of the toxin and insertion into the host membrane. An interaction with glycans from host GPI-anchor region spans residues 346–355 (RWGGNAWYTH). Positions 446 to 492 (AAASHSSRARNLSAGQGLRLEIPLDAQELSGLGFNNVSLSVTPAANQ) are excised as a propeptide.

The protein belongs to the aerolysin family. As to quaternary structure, homodimer in solution; homoheptamer in the host membrane. After binding to GPI-anchored proteins in target membranes and proteolytic removal of the C-terminal propeptide, the protein assembles into a heptameric pre-pore complex. A further conformation change leads to insertion into the host membrane. Proteolytic cleavage and subsequent release of the propeptide trigger a major conformation change, leading to the formation of a heptameric pre-pore that then inserts into the host membrane.

The protein resides in the secreted. The protein localises to the host cell membrane. In terms of biological role, secreted, cytolytic toxin that forms pores in host membranes after proteolytic removal of a C-terminal propeptide, leading to destruction of the membrane permeability barrier and cell death. The pores are formed by transmembrane beta-strands and are approximately 3 nm in diameter. The chain is Aerolysin-3 (ahh3) from Aeromonas hydrophila.